A 561-amino-acid polypeptide reads, in one-letter code: DNA ligase B (561 aa).

Lysine 125 acts as the N6-AMP-lysine intermediate in catalysis.

This sequence belongs to the NAD-dependent DNA ligase family. LigB subfamily.

It carries out the reaction NAD(+) + (deoxyribonucleotide)n-3'-hydroxyl + 5'-phospho-(deoxyribonucleotide)m = (deoxyribonucleotide)n+m + AMP + beta-nicotinamide D-nucleotide.. Its function is as follows. Catalyzes the formation of phosphodiester linkages between 5'-phosphoryl and 3'-hydroxyl groups in double-stranded DNA using NAD as a coenzyme and as the energy source for the reaction. The protein is DNA ligase B of Salmonella arizonae (strain ATCC BAA-731 / CDC346-86 / RSK2980).